A 282-amino-acid polypeptide reads, in one-letter code: NADPH-dependent 7-cyano-7-deazaguanine reductase (282 aa).

Position 88–90 (88–90 (IES)) interacts with substrate. 90-91 (SK) is an NADPH binding site. Cys190 acts as the Thioimide intermediate in catalysis. Asp197 functions as the Proton donor in the catalytic mechanism. A substrate-binding site is contributed by 229–230 (HE). Position 258 to 259 (258 to 259 (RG)) interacts with NADPH.

This sequence belongs to the GTP cyclohydrolase I family. QueF type 2 subfamily. In terms of assembly, homodimer.

The protein localises to the cytoplasm. The catalysed reaction is 7-aminomethyl-7-carbaguanine + 2 NADP(+) = 7-cyano-7-deazaguanine + 2 NADPH + 3 H(+). It participates in tRNA modification; tRNA-queuosine biosynthesis. Its function is as follows. Catalyzes the NADPH-dependent reduction of 7-cyano-7-deazaguanine (preQ0) to 7-aminomethyl-7-deazaguanine (preQ1). The chain is NADPH-dependent 7-cyano-7-deazaguanine reductase from Escherichia coli O157:H7.